Consider the following 224-residue polypeptide: Adenosylcobinamide-GDP ribazoletransferase (224 aa).

Helical transmembrane passes span 21–41 (LSFK…AAIP), 44–64 (LLYL…ATGL), 97–117 (GGIF…HSPL), and 156–176 (WPAA…TTAV).

Belongs to the CobS family. It depends on Mg(2+) as a cofactor.

The protein localises to the cell membrane. The catalysed reaction is alpha-ribazole + adenosylcob(III)inamide-GDP = adenosylcob(III)alamin + GMP + H(+). It carries out the reaction alpha-ribazole 5'-phosphate + adenosylcob(III)inamide-GDP = adenosylcob(III)alamin 5'-phosphate + GMP + H(+). Its pathway is cofactor biosynthesis; adenosylcobalamin biosynthesis; adenosylcobalamin from cob(II)yrinate a,c-diamide: step 7/7. Functionally, joins adenosylcobinamide-GDP and alpha-ribazole to generate adenosylcobalamin (Ado-cobalamin). Also synthesizes adenosylcobalamin 5'-phosphate from adenosylcobinamide-GDP and alpha-ribazole 5'-phosphate. The protein is Adenosylcobinamide-GDP ribazoletransferase of Pyrobaculum aerophilum (strain ATCC 51768 / DSM 7523 / JCM 9630 / CIP 104966 / NBRC 100827 / IM2).